The following is a 180-amino-acid chain: ATP-dependent protease subunit HslV (180 aa).

The active site involves Thr5. Gly165, Cys168, and Thr171 together coordinate Na(+).

This sequence belongs to the peptidase T1B family. HslV subfamily. In terms of assembly, a double ring-shaped homohexamer of HslV is capped on each side by a ring-shaped HslU homohexamer. The assembly of the HslU/HslV complex is dependent on binding of ATP.

The protein resides in the cytoplasm. It carries out the reaction ATP-dependent cleavage of peptide bonds with broad specificity.. Allosterically activated by HslU binding. Functionally, protease subunit of a proteasome-like degradation complex believed to be a general protein degrading machinery. In Helicobacter pylori (strain HPAG1), this protein is ATP-dependent protease subunit HslV.